The sequence spans 199 residues: Recombination protein RecR (199 aa).

Residues 58 to 73 (CARCGNITSADLCDIC) form a C4-type zinc finger. Positions 81–176 (GELCVVEDVA…QVTSLAQGVP (96 aa)) constitute a Toprim domain.

This sequence belongs to the RecR family.

Functionally, may play a role in DNA repair. It seems to be involved in an RecBC-independent recombinational process of DNA repair. It may act with RecF and RecO. In Cereibacter sphaeroides (strain ATCC 17025 / ATH 2.4.3) (Rhodobacter sphaeroides), this protein is Recombination protein RecR.